The following is a 4540-amino-acid chain: MEESETQLNVKVQEQGKLYSANEIENFNQYLSAICLSLLIIDKDQWNVACHEDVNQQNICQFLSDSQIKALIVSKTVENEKFNIQIRSEYEASNNYAHTICFLKRHTFQYDNQLQPQQFSNHVQVINVGYAESQGGANPFTLSHNYVQNCFIPIFTQYKGEIDKKRIVDQSSYNDLIKKLNEVNLAFIKCRQNVEVPEIILQFDPRIKEAVKQRGGKPTIEDAAQLNKPDIVQSISQTVTRWISDINQISNTKLELTNASIVDEINYWMSMERSLFFIENQLKQPEVDFTIEVLTQAKKMNITAQFKEIALKQSLQKCQSCNQFMKEFPINNLLIATNLVEIKDAMIQIFQHMKKLSNIQETYTIPRSLQLAESFSRELTNEMIKYFKGFQILHIKYVDFKGLIIKTQEIFSQWDEEYKIFKQSIVKKSVHQKDQYGQFEHIKLQKQIQHIQRLREMHENLKEVIEQIIQNDQEEQKENVQQFATLQEIQQAYDIFKNVEVFDLSRDGEDQFFRALKQYEIAIESVEATITTNLRDSLGSASSAKEMFRILAKFNKLFSRPRIKGAIQEYQSQLLKTVHKDIQSLQNKFKETYQKSQNSRLASARDIPLTSGFVIWSKQLQIRLQKYMQKVEQILGPQWAEDTDGKKCKEMGETFERILDSGPALEDWKQEINHHNKAVSQNEKLFEVVTRRRGLEIRVNYEKKLSQLFKEVRNLSNMKTKVPYSISHIANDAKASYPFALSLQESLHTYIQITSQLNAKSAKLVAALRKEVQLQIGQGFNYLWTHKTQLQPYVKKFTDKVFELEQAVNGLNERIGQIESLCEAMKTCPVDSLADKLKDIQEVIDSLCFNNFSNLHIWIQDIDKQIESILCDRVTVQMKEWLNQFINYQKIQERGLVNQTVVHELKLQDQIIYVDPPVEYAKYFWFQEFHKMIGQICSLPRLVANRFDNTIQQNTGPWGTQRDLDYSTTINKINQQLIKDAYSQIGQLLEDMEQYVQTWLNYQSLWELDIKQVEQILQDDIEKWQQMLTDIKQGRATFDNSTTEEHFGAIIIDYRMVQVKINHKYDAWHKELLNHFGNKFGEQLRVFNKNVTTEKEKLLKINFQDLTSDIIESITIIQEQDKKFPGWSADIESFKNGQKVLDRQRYQYPGDWLSFEQVEMQWNQFKQIRSKKLQSQESEMNNIQSKIQQDERYLNQQIQEIEEQWKTSKPDSGDCSPNEAEQILKSLNEQLISVQEKYEKCSQAKEILKMDPPTHQQKLNVLLESISDLQDVWQELGKIWKVMQSIKEQLISALQNKKIKDTCDEAQKQLNGVSTKTRNYDAFEKMKEKVKNYIKMNKLIMDLKDESMKERHWRQLLSKLKINESLNQLQMQHLWNANLLNYENLAKDIMTVARGEQVLETMISQVKDFWNSFELELVKYQTKCKLIRGWDELFQKLDEDLNNLASMKISPFYKTFEAEISQWDDKLQKVKLTMDIWIDVQRRWVYLEGIFFGSSDIKTQLQNEYNKFKDIDSQFTNLMKKVAQKPQLMDVQGIPNLAKTLERLSDFLQKIQKALGDYLETQRQAFARFYFVGDDDLLDIIGNSKDVTNVQRHFPKMYAGIVQLQSRKDGNDDVVLGMSSKEGEVVPFSKEVKIAEDPRINIWLGKVDNEMMNSLALDLEKSVLDIQANQQNRMKVIEEHPAQIILLALQVGWCFSVESSFNNEQQMKQTLQYVLEFLSELAESVLKDHPKQLRQKFEQIITDFVHQRDVIRLLMNNKINSKNDFGWQYHMRFNWNSKEADPGKRLLIQMGNAQFHYGFEYLGVAEKLVQTPLTDKCFLTLTQALHLRMGGSPFGPAGTGKTESVKALGAQLGRFVLVFNCDETFDFNAMGRIFVGLCQVGAWGCFDEFNRLEERMLSACSQQILLIQTGLREKQKQIELMGKDVKLSSQMGVFVTMNPGYAGRSNLPENLKQLFRQMAMVKPDRELIAQVMLFSQGFRTAEKLAGKIVSLFELCDNQLSSQPHYDFGLRALKSVLNSAGNMKRQEMIDRKQEPVPQSEIEEFEQTILLRSVCDTVVPKLIKDDIKLLETLLQGVFPGSCIPEIKEEQLRKELALACQRKNLQSSKNFIEKVLQLYQIQRLQHGLMLVGPCGCGKSAAWRVLLEAMYKCDKVKGEFYIVDPKAISKDELYGRLDNTTLEWTDGVFTSILRKIISNQRQESTRRHWIIFDGDVDPEWAENLNSVLDDNKLLTLPNGERLAIPPNVRMIFEVETLKYATLATVSRCGMVWFSEETINDENIFYHFLERLKQDDYDQQKSEDDNNKQVNSQESELRTKCVKALESIIKFLSQFLQIAQKPEYKHVMEFTRIRVLESTFALVRRSISNIIEYNENNSEVPLEDDQINDFMVKQFLIAVMWGVAGSMNLYQRTQYSKEICQLLPHNVILPQFNDSAPSLIDFEVTLPEAQWSQYKKKVPQIEIDPQRVTDADLIIETVDTLRHKDVLCGWLNEHRPFLLCGPPGSGKTMTLMSTLKALTDFEMIFINFSSSTMPQLIIKQFDHYCEYKKTTNGVFLQPKNQKWLVVFCDEINLPDQDKYGTMAIITFLRQLTEQHGFWRSSDRQWISLDRIQFVGACNPPTDVGRKPLTPRFLRHCPLILVDFPGPESLKQIYGTFNKAMLRRTVNLKQYSEQLTNAMVEFYTKSQQHFTADQQAHYIYSPRELTRWKYALNEALEPLESVEDLVRLWAHEGLRLFQDRLVHEHEKEWCNKLIDQVAYNNFNNLKDEALQRPILFSNYLHKVYQSVDREELRKYIQGRLKQFNEEELSVPLVVFDDVLDHILRIDRVLKQPLGHLLLVGSSGVGKTTLTRFVSWINNLTVFQIKAGRDYQLADFDNDLREVMKRAGAKGEKITFIFDESNVLGPSFLEKMNALLASGEIPGLFENDEYLALINLLKENSNQNKQFDSSEEQLFKNFTYQVQRNLHVVFTMNPKNPDFSNRTASSPALFNRCVIDWFGDWTNEALFQVGKAFTMYIDPPENAFSKKIKDETQRQHILVSTLVYIQNTIIELNNKLQKGAKRFNYITPRDYLDFLKHFEKLHNEKKSQLEDQQLHLNVGLDKLKETEQQVLEMQKSLDQKKVELLTKERQAGEKLQTIIEEKKIAEKKKEDSTRLSSDAEKKAKEMEVRQSQVNKELNEALPALENAKQCVNSIKKDDLNQIRALGSPPALVKLTMEAVVCAINSLEKSPEWKDVQKSMANMNFINNVINFNTETMPPKVKKFILTKYLSAQEWNIDRINFASKAAGPLAMWLDSQLKYADILQKVDPLRQEVAKLLQESDELNTQKKIYDDEVAAAEAKIHNLQQEYSELISQKESIKSEMLKVQEKVTRSQALLSDLSGERVRWEEASQNFKSQLATMIGDVLLLLAIPVLYWVLDHFYRKVVINTWKDYLSGQANIFYRQDLSLIEFLSRPSDRLNWQLHTLPSDDLCMENAIILYRFQRYPLVIDPSGQALSFISSLYKDKKLARTSFTDESFLKTLETCLRFGCPLLVQDVEKVDPILNSVLNNETYKTGGRVLIRVGNQEIDFSQGFTMFMITRDSTARFTPDLCSRVTFVNFTVTQSSLQEQCLNIFLRNESPETEEKRLNLMKLQGEYIVKLRELEDQLLDSLNNSRGSILEDEKVIQTLEKLKKEAAVIVQEMKQADTIMNEVMNTTHSYVPLANTTSKIFFSLTSLANIHYLYQFSLQFFMDTIYNVLNKNEQLQKIPKQDLIKRRILIFNEMFKEIYKRMNFSLLQEDKLVFAITLAQVKLGDNTLGQEFLNVFKPPTVMETTFSNTFLQGKLSIQQLKQLEGITQQNQTFNRLIDNLNKNEDRWLNFLNDEAPENDIPTQWYNEVQRDDIVKLDWIDSHQLKRQLDDLHILRIFRADRFQIIARKLINQILGEGFMDEQTVDMKLVVEKEASNKIPILLCSAPGFDPSFKVEQLSREMGIKLTSVAIGSAEGFDQAEYEITQSVKSGSWVMLKNVHLATSWLNDLEKKLFRLTPNANFRIFLTMEFNPKIPTTLIRQSYKLVFEPPDGIKASLIRTFKTVLSQQRTDRQPVERARLHFLLAWLHAVILERLRFTPIGWSKTYEFNEADQRCSLDLIDEYVDALGIRQNIDPSKLPWDAFRTILTQNLYGGKVDNEYDQKILQSLVEQFFTEQSFNHNHPLFFTLEGKEAITVPEGRTYLDFMQWIEQLPKTESPEWSGLPSNVERVQRDQLTQKLITKVQNLQQEGEEEITQIEVQTEKTQKKDNKKSDQVQWLQDLLEKVEKFKAILPNKISPLERTADSINDPLFRFLDREITVASKLLKAVRQNIEELIQLAQGKILATNILRQLAKDVFNNIVPAQWNKYNVITMPLNDWVGDFKRRIDQFDLLGKTKDFQKGQVWFGGLLFPEAYLTATRQYVAQANKWSLEELELQMIPEDQGIDEDSFVIEGVSMEGGHLDSKTLQVRIVNEISVALKPITLKWCKTSQKGVVGDDEIVLPVYLNKTRKNLIFSLKVKMGKLNRYTLYQKGLSFILFN.

The interval 1–1796 (MEESETQLNV…LIQMGNAQFH (1796 aa)) is stem. Coiled-coil stretches lie at residues 440–482 (EHIK…NVQQ), 698–722 (RVNYEKKLSQLFKEVRNLSNMKTKV), 794–827 (VKKFTDKVFELEQAVNGLNERIGQIESLCEAMKT), 975–995 (QQLIKDAYSQIGQLLEDMEQY), 1169–1251 (RSKK…LKMD), and 1295–1311 (QNKKIKDTCDEAQKQLN). AAA stretches follow at residues 1797-2018 (YGFE…VLNS), 2091-2348 (KELA…FTRI), 2457-2705 (EIDP…WKYA), and 2796-3056 (QFNE…AKRF). Residues 1835–1842 (GPAGTGKT), 2129–2136 (GPCGCGKS), 2496–2503 (GPPGSGKT), and 2834–2841 (GSSGVGKT) each bind ATP. 4 coiled-coil regions span residues 3076-3182 (NEKK…NAKQ), 3289-3367 (QLKY…RSQA), 3653-3688 (EDEKVIQTLEKLKKEAAVIVQEMKQADTIMNEVMNT), and 3820-3851 (QQLKQLEGITQQNQTFNRLIDNLNKNEDRWLN). Residues 3076-3367 (NEKKSQLEDQ…VQEKVTRSQA (292 aa)) form a stalk region. Residues 3140-3159 (KKKEDSTRLSSDAEKKAKEM) are disordered. The tract at residues 3444-3673 (LSRPSDRLNW…LKKEAAVIVQ (230 aa)) is AAA 5. The interval 3908 to 4123 (ARKLINQILG…QRCSLDLIDE (216 aa)) is AAA 6. Coiled-coil stretches lie at residues 4238–4259 (QKLITKVQNLQQEGEEEITQIE) and 4313–4342 (RFLDREITVASKLLKAVRQNIEELIQLAQG).

Belongs to the dynein heavy chain family. Consists of at least two heavy chains and a number of intermediate and light chains.

It is found in the cytoplasm. It localises to the cytoskeleton. In terms of biological role, cytoplasmic dynein acts as a motor for the intracellular retrograde motility of vesicles and organelles along microtubules. Dynein has ATPase activity; the force-producing power stroke is thought to occur on release of ADP. This is Dynein heavy chain, cytoplasmic (DHC-8) from Paramecium tetraurelia.